The chain runs to 600 residues: Methionine--tRNA ligase (600 aa).

The 'HIGH' region signature appears at 12 to 22; it reads PYANGPRHIGH. Zn(2+) is bound by residues Cys144, Cys147, Cys157, and Cys160. Positions 351–355 match the 'KMSKS' region motif; it reads KFSSS. Ser354 contacts ATP.

The protein belongs to the class-I aminoacyl-tRNA synthetase family. MetG type 1 subfamily. As to quaternary structure, monomer. The cofactor is Zn(2+).

It localises to the cytoplasm. It carries out the reaction tRNA(Met) + L-methionine + ATP = L-methionyl-tRNA(Met) + AMP + diphosphate. Functionally, is required not only for elongation of protein synthesis but also for the initiation of all mRNA translation through initiator tRNA(fMet) aminoacylation. The polypeptide is Methionine--tRNA ligase (Chloroflexus aggregans (strain MD-66 / DSM 9485)).